A 435-amino-acid chain; its full sequence is Salicylate hydroxylase (435 aa).

12 to 41 lines the FAD pocket; that stretch reads RVAIVGGGISGLALALSLCKHSHLNVQLFE.

Requires FAD as cofactor.

The catalysed reaction is salicylate + NADH + O2 + 2 H(+) = catechol + CO2 + NAD(+) + H2O. It participates in aromatic compound metabolism; naphthalene degradation. This chain is Salicylate hydroxylase (nahG), found in Pseudomonas putida (Arthrobacter siderocapsulatus).